The sequence spans 104 residues: Flagellar hook-basal body complex protein FliE (104 aa).

Belongs to the FliE family.

Its subcellular location is the bacterial flagellum basal body. This Escherichia coli (strain SE11) protein is Flagellar hook-basal body complex protein FliE.